A 103-amino-acid polypeptide reads, in one-letter code: Large ribosomal subunit protein uL24 (103 aa).

It belongs to the universal ribosomal protein uL24 family. Part of the 50S ribosomal subunit.

One of two assembly initiator proteins, it binds directly to the 5'-end of the 23S rRNA, where it nucleates assembly of the 50S subunit. Functionally, one of the proteins that surrounds the polypeptide exit tunnel on the outside of the subunit. The polypeptide is Large ribosomal subunit protein uL24 (Lachnospira eligens (strain ATCC 27750 / DSM 3376 / VPI C15-48 / C15-B4) (Eubacterium eligens)).